A 413-amino-acid polypeptide reads, in one-letter code: Multifunctional CCA protein (413 aa).

Residues glycine 8 and arginine 11 each contribute to the ATP site. The CTP site is built by glycine 8 and arginine 11. The Mg(2+) site is built by aspartate 21 and aspartate 23. The ATP site is built by arginine 91, arginine 137, and arginine 140. CTP-binding residues include arginine 91, arginine 137, and arginine 140. Positions 228 to 329 (TGVHTLMTLS…VKLFDAIDAW (102 aa)) constitute an HD domain.

The protein belongs to the tRNA nucleotidyltransferase/poly(A) polymerase family. Bacterial CCA-adding enzyme type 1 subfamily. Monomer. Can also form homodimers and oligomers. It depends on Mg(2+) as a cofactor. Ni(2+) is required as a cofactor.

It carries out the reaction a tRNA precursor + 2 CTP + ATP = a tRNA with a 3' CCA end + 3 diphosphate. The enzyme catalyses a tRNA with a 3' CCA end + 2 CTP + ATP = a tRNA with a 3' CCACCA end + 3 diphosphate. Catalyzes the addition and repair of the essential 3'-terminal CCA sequence in tRNAs without using a nucleic acid template. Adds these three nucleotides in the order of C, C, and A to the tRNA nucleotide-73, using CTP and ATP as substrates and producing inorganic pyrophosphate. tRNA 3'-terminal CCA addition is required both for tRNA processing and repair. Also involved in tRNA surveillance by mediating tandem CCA addition to generate a CCACCA at the 3' terminus of unstable tRNAs. While stable tRNAs receive only 3'-terminal CCA, unstable tRNAs are marked with CCACCA and rapidly degraded. The sequence is that of Multifunctional CCA protein from Salmonella paratyphi A (strain ATCC 9150 / SARB42).